The chain runs to 143 residues: Large ribosomal subunit protein uL11 (143 aa).

This sequence belongs to the universal ribosomal protein uL11 family. As to quaternary structure, part of the ribosomal stalk of the 50S ribosomal subunit. Interacts with L10 and the large rRNA to form the base of the stalk. L10 forms an elongated spine to which L12 dimers bind in a sequential fashion forming a multimeric L10(L12)X complex. In terms of processing, one or more lysine residues are methylated.

Forms part of the ribosomal stalk which helps the ribosome interact with GTP-bound translation factors. The polypeptide is Large ribosomal subunit protein uL11 (Psychrobacter cryohalolentis (strain ATCC BAA-1226 / DSM 17306 / VKM B-2378 / K5)).